Reading from the N-terminus, the 22-residue chain is Unknown endosperm protein L (22 aa).

Positions 1–11 (MRHSNKIRDEE) are enriched in basic and acidic residues. The disordered stretch occupies residues 1–22 (MRHSNKIRDEEMVNNTRLNXXA). A compositionally biased stretch (polar residues) spans 13–22 (VNNTRLNXXA).

The N-terminus is blocked.

This Hordeum vulgare (Barley) protein is Unknown endosperm protein L.